The chain runs to 1014 residues: Poly [ADP-ribose] polymerase 1 (1014 aa).

At Ala-2 the chain carries N-acetylalanine. The segment at 9–93 adopts a PARP-type 1 zinc-finger fold; sequence YRVEYAKSGR…KVKKTAEAGG (85 aa). Residues Cys-21 and Cys-24 each contribute to the Zn(2+) site. Ser-41 carries the post-translational modification Phosphoserine. Residues His-53 and Cys-56 each contribute to the Zn(2+) site. Residues Lys-97 and Lys-105 each carry the N6-acetyllysine modification. The PARP-type 2 zinc finger occupies 113 to 203; the sequence is FAAEYAKSNR…ALKKQLPGVK (91 aa). Zn(2+) contacts are provided by Cys-125 and Cys-128. Lys-131 is modified (N6-acetyllysine). Zn(2+) contacts are provided by His-159 and Cys-162. 3 positions are modified to phosphoserine: Ser-177, Ser-179, and Ser-185. Lys-192 participates in a covalent cross-link: Glycyl lysine isopeptide (Lys-Gly) (interchain with G-Cter in SUMO2). Residues 198–233 are disordered; the sequence is QLPGVKSEGKRKGDEVDGVDEVAKKKSKKEKDKDSK. Lys-203 is covalently cross-linked (Glycyl lysine isopeptide (Lys-Gly) (interchain with G-Cter in SUMO1); alternate). Lys-203 participates in a covalent cross-link: Glycyl lysine isopeptide (Lys-Gly) (interchain with G-Cter in SUMO2); alternate. Residues 204–233 are compositionally biased toward basic and acidic residues; sequence SEGKRKGDEVDGVDEVAKKKSKKEKDKDSK. 2 consecutive short sequence motifs (nuclear localization signal) follow at residues 207–209 and 221–226; these read KRK and KKKSKK. The region spanning 225 to 359 is the PADR1 zinc-binding domain; that stretch reads KKEKDKDSKL…VKKQDRIFPP (135 aa). A Glycyl lysine isopeptide (Lys-Gly) (interchain with G-Cter in SUMO2) cross-link involves residue Lys-249. Ser-274 and Ser-277 each carry phosphoserine. A zinc ribbon region spans residues 290–332; it reads GALLPCEECSGQLVFKSDAYYCTGDVTAWTKCMVKTQTPNRKE. The Zn(2+) site is built by Cys-295, Cys-298, Cys-311, and Cys-321. The tract at residues 361-385 is disordered; sequence TSASVAATPPPSTASAPAAVNSSAS. Ser-364 is subject to Phosphoserine. Thr-368 bears the Phosphothreonine mark. An automodification domain region spans residues 373 to 524; it reads TASAPAAVNS…GINKSEKRMK (152 aa). Residues 385–476 form the BRCT domain; that stretch reads SADKPLSNMK…KSLQELFLAH (92 aa). At Asp-387 the chain carries PolyADP-ribosyl aspartic acid. Glu-407, Glu-413, Glu-435, Glu-437, Glu-444, Glu-445, Glu-448, and Glu-456 each carry polyADP-ribosyl glutamic acid. A Glycyl lysine isopeptide (Lys-Gly) (interchain with G-Cter in SUMO2) cross-link involves residue Lys-467. 2 positions are modified to polyADP-ribosyl glutamic acid: Glu-471 and Glu-484. A Glycyl lysine isopeptide (Lys-Gly) (interchain with G-Cter in SUMO1); alternate cross-link involves residue Lys-486. Residue Lys-486 forms a Glycyl lysine isopeptide (Lys-Gly) (interchain with G-Cter in SUMO2); alternate linkage. Residues Glu-488 and Glu-491 each carry the polyADP-ribosyl glutamic acid modification. Residues Ser-499, Ser-504, and Ser-507 each carry the ADP-ribosylserine modification. Lys-512 is covalently cross-linked (Glycyl lysine isopeptide (Lys-Gly) (interchain with G-Cter in SUMO2)). PolyADP-ribosyl glutamic acid is present on residues Glu-513 and Glu-514. Ser-519 bears the ADP-ribosylserine mark. Glu-520 bears the PolyADP-ribosyl glutamic acid mark. Lys-521 carries the post-translational modification N6-(ADP-ribosyl)lysine. Residue Lys-528 forms a Glycyl lysine isopeptide (Lys-Gly) (interchain with G-Cter in SUMO2) linkage. Residues 542–638 enclose the WGR domain; it reads SAHVLEKGGK…KNFTKYPKKF (97 aa). Thr-594 carries the phosphothreonine; by PRKDC modification. N6-acetyllysine occurs at positions 600 and 621. A PARP alpha-helical domain is found at 662-779; sequence KSKLPKPVQD…DIEVAYSLLR (118 aa). A Glycyl lysine isopeptide (Lys-Gly) (interchain with G-Cter in SUMO1); alternate cross-link involves residue Lys-748. Lys-748 participates in a covalent cross-link: Glycyl lysine isopeptide (Lys-Gly) (interchain with G-Cter in SUMO2); alternate. A phosphoserine mark is found at Ser-782 and Ser-786. A PARP catalytic domain is found at 788 to 1014; sequence DPIDVNYEKL…LKFNFKTSLW (227 aa). Residues 862–864, Gly-871, Arg-878, and Ser-904 each bind NAD(+); that span reads HGS. Residue Glu-988 is the For poly [ADP-ribose] polymerase activity of the active site.

This sequence belongs to the ARTD/PARP family. In terms of assembly, homodimer; PARP-type zinc-fingers from separate PARP1 molecules form a dimer module that specifically recognizes DNA strand breaks. Heterodimer; heterodimerizes with PARP2. Interacts (via the PARP catalytic domain) with HPF1. Interacts with NMNAT1. Interacts with nucleosomes; with a preference for nucleosomes containing H2A.X. Interacts with APTX. Component of a base excision repair (BER) complex, containing at least XRCC1, PARP1, PARP2, POLB and LRIG3. Interacts with SRY. The SWAP complex consists of NPM1, NCL, PARP1 and SWAP70. Interacts with TIAM2. Interacts with PARP3; leading to activate PARP1 in absence of DNA. Interacts (when poly-ADP-ribosylated) with CHD1L (via macro domain). Interacts with the DNA polymerase alpha catalytic subunit POLA1; this interaction functions as part of the control of replication fork progression. Interacts with EEF1A1 and TXK. Interacts with RNF4. Interacts with RNF146. Interacts with ZNF423. Interacts with APLF. Interacts with SNAI1 (via zinc fingers); the interaction requires SNAI1 to be poly-ADP-ribosylated and non-phosphorylated (active) by GSK3B. Interacts (when poly-ADP-ribosylated) with PARP9. Interacts with NR4A3; activates PARP1 by improving acetylation of PARP1 and suppressing the interaction between PARP1 and SIRT1. Interacts (via catalytic domain) with PUM3; the interaction inhibits the poly-ADP-ribosylation activity of PARP1 and the degradation of PARP1 by CASP3 following genotoxic stress. Interacts with ZNF365. Interacts with RRP1B. Interacts with TIMELESS; the interaction is direct. Interacts with CGAS; leading to impede the formation of the PARP1-TIMELESS complex. Interacts with KHDC3L, the interaction is increased following the formation of DNA double-strand breaks. Interacts (when auto-poly-ADP-ribosylated) with XRCC1; leading to inhibit PARP1 ADP-ribosyltransferase activity. Interacts with SPINDOC; promoting PARP1 ADP-ribosyltransferase activity. Interacts with BANF1; leading to inhibit PARP1 ADP-ribosyltransferase activity in response to oxidative DNA damage. Interacts (when sumoylated and ubiquitinated) with VCP/p97; leading to its extraction from chromatin. Interacts with YARS1; Interacts with PACMP micropeptide; interaction. Interacts with PACMP micropeptide; Interacts with PACMP micropeptide; interaction. Interacts (when poly-ADP-ribosylated) with isoform 1 of MACROH2A1; MACROH2A1 specifically binds to poly-ADP-ribose chains and inhibits PARP1 activity, limiting the consumption of nuclear NAD(+). Interacts with CARM1; promoting recruitment to replication forks. Interacts with RECQL. Interacts with ZNF32; the interaction reshapes ZNF432 interacting proteins. Interacts with TPRN; TPRN interacts with a number of DNA damage response proteins, is recruited to sites of DNA damage and may play a role in DNA damage repair. As to quaternary structure, interacts (when auto-poly-ADP-ribosylated) with AIFM1. (Microbial infection) Interacts with human herpesvirus 8 (KSHV) protein RTA/ORF50; this interaction negatively regulates RTA/ORF50 transactivation activity. In terms of processing, poly-ADP-ribosylated on serine, glutamate and aspartate residues by autocatalysis. Auto-ADP-ribosylation on serine takes place following interaction with HPF1. Auto poly-ADP-ribosylation on serine residues promotes its dissociation from chromatin. Poly-ADP-ribosylated by PARP2; poly-ADP-ribosylation mediates the recruitment of CHD1L to DNA damage sites. Mono-ADP-ribosylated at Lys-521 by SIRT6 in response to oxidative stress, promoting recruitment to double-strand breaks (DSBs) sites. Phosphorylated at Thr-594 by PRKDC in response to DNA damage following virus infection, promoting its translocation to the cytosol. Phosphorylated by TXK. Post-translationally, S-nitrosylated, leading to inhibit transcription regulation activity. In terms of processing, proteolytically cleaved by caspase-3 (CASP3) and caspase-7 (CASP7) in response to apoptosis to generate the Poly [ADP-ribose] polymerase 1, processed N-terminus and Poly [ADP-ribose] polymerase 1, processed C-terminus forms. CASP3-mediated cleavage is promoted by the TP53/p53-induced long non-coding RNA SPARCLE, which binds PARP1 in response to genotoxic stress. Sumoylated with SUMO1 or SUMO2 by PIAS4 following prolonged residence (trapping) to chromatin. Sumoylation promotes ubiquitination by RNF4 and removal from chromatin by VCP/p97. Post-translationally, ubiquitinated by RNF4 following sumoylation by PIAS4 in response to prolonged residence (trapping) to chromatin. Ubiquitination promotes removal from chromatin by VCP/p97.

It localises to the chromosome. Its subcellular location is the nucleus. The protein localises to the nucleolus. The protein resides in the cytoplasm. It is found in the cytosol. The enzyme catalyses NAD(+) + (ADP-D-ribosyl)n-acceptor = nicotinamide + (ADP-D-ribosyl)n+1-acceptor + H(+).. The catalysed reaction is L-seryl-[protein] + NAD(+) = O-(ADP-D-ribosyl)-L-seryl-[protein] + nicotinamide + H(+). It catalyses the reaction L-aspartyl-[protein] + NAD(+) = 4-O-(ADP-D-ribosyl)-L-aspartyl-[protein] + nicotinamide. It carries out the reaction L-glutamyl-[protein] + NAD(+) = 5-O-(ADP-D-ribosyl)-L-glutamyl-[protein] + nicotinamide. The enzyme catalyses L-tyrosyl-[protein] + NAD(+) = O-(ADP-D-ribosyl)-L-tyrosyl-[protein] + nicotinamide + H(+). The catalysed reaction is L-histidyl-[protein] + NAD(+) = N(tele)-(ADP-D-ribosyl)-L-histidyl-[protein] + nicotinamide + H(+). Its activity is regulated as follows. ADP-ribosyltransferase activity is regulated via an allosteric activation mechanism. In absence of activation signal, PARP1 is autoinhibited by the PARP alpha-helical domain (also named HD region), which prevents effective NAD(+)-binding. Activity is highly stimulated by signals, such as DNA strand breaks. Binding to damaged DNA unfolds the PARP alpha-helical domain, relieving autoinhibition. Poly-ADP-ribosyltransferase activity is tightly regulated and PARP1 is removed from damaged chromatin following initial poly-ADP-ribosylation of chromatin to avoid prolonged residence (trapping) that has cytotoxic consequences. A number of factors (VCP/p97) or post-translational modifications (auto-poly-ADP-ribosylation or ubiquitination) promote PARP1 removal from chromatin. ADP-ribosyltransferase activity is inhibited by a number of PARP inhibitors (PARPi) compounds, that are used the treatment of breast or ovarian cancers that have defects in DNA repair by homologous recombination. PARPi molecules can be classified in three categories: type I compounds (EB-47, UKTT15 and BAD) that promote allosteric retention of PARP1 on DNA, type II inhibitors (talazoparib and olaparib) that mediate a non-allosteric inhibition, and type III inhibitors (rucaparib, niraparib, and veliparib) that promote allosteric release from DNA. Trapping to chromatin by PARPi molecules triggers activation of the cGAS-STING pathway. Its function is as follows. Poly-ADP-ribosyltransferase that mediates poly-ADP-ribosylation of proteins and plays a key role in DNA repair. Mediates glutamate, aspartate, serine, histidine or tyrosine ADP-ribosylation of proteins: the ADP-D-ribosyl group of NAD(+) is transferred to the acceptor carboxyl group of target residues and further ADP-ribosyl groups are transferred to the 2'-position of the terminal adenosine moiety, building up a polymer with an average chain length of 20-30 units. Serine ADP-ribosylation of proteins constitutes the primary form of ADP-ribosylation of proteins in response to DNA damage. Specificity for the different amino acids is conferred by interacting factors, such as HPF1 and NMNAT1. Following interaction with HPF1, catalyzes serine ADP-ribosylation of target proteins; HPF1 confers serine specificity by completing the PARP1 active site. Also catalyzes tyrosine ADP-ribosylation of target proteins following interaction with HPF1. Following interaction with NMNAT1, catalyzes glutamate and aspartate ADP-ribosylation of target proteins; NMNAT1 confers glutamate and aspartate specificity. PARP1 initiates the repair of DNA breaks: recognizes and binds DNA breaks within chromatin and recruits HPF1, licensing serine ADP-ribosylation of target proteins, such as histones (H2BS6ADPr and H3S10ADPr), thereby promoting decompaction of chromatin and the recruitment of repair factors leading to the reparation of DNA strand breaks. HPF1 initiates serine ADP-ribosylation but restricts the polymerase activity of PARP1 in order to limit the length of poly-ADP-ribose chains. In addition to base excision repair (BER) pathway, also involved in double-strand breaks (DSBs) repair: together with TIMELESS, accumulates at DNA damage sites and promotes homologous recombination repair by mediating poly-ADP-ribosylation. Mediates the poly-ADP-ribosylation of a number of proteins, including itself, APLF, CHFR, RPA1 and NFAT5. In addition to proteins, also able to ADP-ribosylate DNA: catalyzes ADP-ribosylation of DNA strand break termini containing terminal phosphates and a 2'-OH group in single- and double-stranded DNA, respectively. Required for PARP9 and DTX3L recruitment to DNA damage sites. PARP1-dependent PARP9-DTX3L-mediated ubiquitination promotes the rapid and specific recruitment of 53BP1/TP53BP1, UIMC1/RAP80, and BRCA1 to DNA damage sites. PARP1-mediated DNA repair in neurons plays a role in sleep: senses DNA damage in neurons and promotes sleep, facilitating efficient DNA repair. In addition to DNA repair, also involved in other processes, such as transcription regulation, programmed cell death, membrane repair, adipogenesis and innate immunity. Acts as a repressor of transcription: binds to nucleosomes and modulates chromatin structure in a manner similar to histone H1, thereby altering RNA polymerase II. Acts both as a positive and negative regulator of transcription elongation, depending on the context. Acts as a positive regulator of transcription elongation by mediating poly-ADP-ribosylation of NELFE, preventing RNA-binding activity of NELFE and relieving transcription pausing. Acts as a negative regulator of transcription elongation in response to DNA damage by catalyzing poly-ADP-ribosylation of CCNT1, disrupting the phase separation activity of CCNT1 and subsequent activation of CDK9. Involved in replication fork progression following interaction with CARM1: mediates poly-ADP-ribosylation at replication forks, slowing fork progression. Poly-ADP-ribose chains generated by PARP1 also play a role in poly-ADP-ribose-dependent cell death, a process named parthanatos. Also acts as a negative regulator of the cGAS-STING pathway. Acts by mediating poly-ADP-ribosylation of CGAS: PARP1 translocates into the cytosol following phosphorylation by PRKDC and catalyzes poly-ADP-ribosylation and inactivation of CGAS. Acts as a negative regulator of adipogenesis: catalyzes poly-ADP-ribosylation of histone H2B on 'Glu-35' (H2BE35ADPr) following interaction with NMNAT1, inhibiting phosphorylation of H2B at 'Ser-36' (H2BS36ph), thereby blocking expression of pro-adipogenetic genes. Involved in the synthesis of ATP in the nucleus, together with NMNAT1, PARG and NUDT5. Nuclear ATP generation is required for extensive chromatin remodeling events that are energy-consuming. Functionally, promotes AIFM1-mediated apoptosis. This form, which translocates into the cytoplasm following cleavage by caspase-3 (CASP3) and caspase-7 (CASP7) in response to apoptosis, is auto-poly-ADP-ribosylated and serves as a poly-ADP-ribose carrier to induce AIFM1-mediated apoptosis. In terms of biological role, this cleavage form irreversibly binds to DNA breaks and interferes with DNA repair, promoting DNA damage-induced apoptosis. The sequence is that of Poly [ADP-ribose] polymerase 1 from Homo sapiens (Human).